Consider the following 490-residue polypeptide: Bifunctional protein HldE (490 aa).

The tract at residues 1–330 (MFDFDDLSQA…RKILPHAYRA (330 aa)) is ribokinase. 205-208 (NRKE) serves as a coordination point for ATP. Residue aspartate 275 is part of the active site. Residues 358–490 (FTNGCFDILH…LVDRARSDQR (133 aa)) are cytidylyltransferase.

The protein in the N-terminal section; belongs to the carbohydrate kinase PfkB family. It in the C-terminal section; belongs to the cytidylyltransferase family. In terms of assembly, homodimer.

It catalyses the reaction D-glycero-beta-D-manno-heptose 7-phosphate + ATP = D-glycero-beta-D-manno-heptose 1,7-bisphosphate + ADP + H(+). The catalysed reaction is D-glycero-beta-D-manno-heptose 1-phosphate + ATP + H(+) = ADP-D-glycero-beta-D-manno-heptose + diphosphate. It functions in the pathway nucleotide-sugar biosynthesis; ADP-L-glycero-beta-D-manno-heptose biosynthesis; ADP-L-glycero-beta-D-manno-heptose from D-glycero-beta-D-manno-heptose 7-phosphate: step 1/4. Its pathway is nucleotide-sugar biosynthesis; ADP-L-glycero-beta-D-manno-heptose biosynthesis; ADP-L-glycero-beta-D-manno-heptose from D-glycero-beta-D-manno-heptose 7-phosphate: step 3/4. In terms of biological role, catalyzes the phosphorylation of D-glycero-D-manno-heptose 7-phosphate at the C-1 position to selectively form D-glycero-beta-D-manno-heptose-1,7-bisphosphate. Catalyzes the ADP transfer from ATP to D-glycero-beta-D-manno-heptose 1-phosphate, yielding ADP-D-glycero-beta-D-manno-heptose. The polypeptide is Bifunctional protein HldE (Bradyrhizobium sp. (strain ORS 278)).